Reading from the N-terminus, the 318-residue chain is Ferredoxin--NADP reductase (318 aa).

FAD is bound by residues Asp33, Gln41, Tyr46, Val84, Phe115, Asp276, and Thr316.

This sequence belongs to the ferredoxin--NADP reductase type 2 family. In terms of assembly, homodimer. It depends on FAD as a cofactor.

The catalysed reaction is 2 reduced [2Fe-2S]-[ferredoxin] + NADP(+) + H(+) = 2 oxidized [2Fe-2S]-[ferredoxin] + NADPH. This is Ferredoxin--NADP reductase from Lactobacillus gasseri (strain ATCC 33323 / DSM 20243 / BCRC 14619 / CIP 102991 / JCM 1131 / KCTC 3163 / NCIMB 11718 / NCTC 13722 / AM63).